The sequence spans 338 residues: DNA-directed RNA polymerase subunit alpha (338 aa).

The interval 1-234 is alpha N-terminal domain (alpha-NTD); it reads MIHKNWAELI…DQLSIFVNFE (234 aa). The alpha C-terminal domain (alpha-CTD) stretch occupies residues 250–338; the sequence is FNPLLLKKVD…DLAKRFEDQF (89 aa).

This sequence belongs to the RNA polymerase alpha chain family. Homodimer. The RNAP catalytic core consists of 2 alpha, 1 beta, 1 beta' and 1 omega subunit. When a sigma factor is associated with the core the holoenzyme is formed, which can initiate transcription.

It carries out the reaction RNA(n) + a ribonucleoside 5'-triphosphate = RNA(n+1) + diphosphate. Its function is as follows. DNA-dependent RNA polymerase catalyzes the transcription of DNA into RNA using the four ribonucleoside triphosphates as substrates. This is DNA-directed RNA polymerase subunit alpha from Cereibacter sphaeroides (strain ATCC 17025 / ATH 2.4.3) (Rhodobacter sphaeroides).